Consider the following 166-residue polypeptide: Myosin regulatory light chain 2, ventricular/cardiac muscle isoform (166 aa).

At Ala2 the chain carries N,N,N-trimethylalanine. A Deamidated asparagine modification is found at Asn14. Ser15 is modified (phosphoserine; by ZIPK/DAPK3). At Ser19 the chain carries Phosphoserine. 3 consecutive EF-hand domains span residues 24-59 (TQIQ…LGRV), 94-129 (DPEE…QAER), and 130-165 (FSKE…GEEK). Ca(2+) contacts are provided by Asp37, Asn39, Asp41, and Asp48. Thr52 carries the post-translational modification Phosphothreonine.

In terms of assembly, myosin is a hexamer of 2 heavy chains and 4 light chains. Interacts with MYOC. N-terminus is methylated by METTL11A/NTM1. Post-translationally, phosphorylated by MYLK3 and MYLK2; promotes cardiac muscle contraction and function. Dephosphorylated by PPP1CB complexed to PPP1R12B. The phosphorylated form in adult is expressed as gradients across the heart from endocardium (low phosphorylation) to epicardium (high phosphorylation); regulates cardiac torsion and workload distribution. As to expression, highly expressed in type I muscle fibers.

Its subcellular location is the cytoplasm. The protein resides in the myofibril. It is found in the sarcomere. It localises to the a band. Functionally, contractile protein that plays a role in heart development and function. Following phosphorylation, plays a role in cross-bridge cycling kinetics and cardiac muscle contraction by increasing myosin lever arm stiffness and promoting myosin head diffusion; as a consequence of the increase in maximum contraction force and calcium sensitivity of contraction force. These events altogether slow down myosin kinetics and prolong duty cycle resulting in accumulated myosins being cooperatively recruited to actin binding sites to sustain thin filament activation as a means to fine-tune myofilament calcium sensitivity to force. During cardiogenesis plays an early role in cardiac contractility by promoting cardiac myofibril assembly. The chain is Myosin regulatory light chain 2, ventricular/cardiac muscle isoform from Homo sapiens (Human).